We begin with the raw amino-acid sequence, 600 residues long: Glutamine--fructose-6-phosphate aminotransferase [isomerizing] (600 aa).

The active-site Nucleophile; for GATase activity is cysteine 2. The 216-residue stretch at 2 to 217 (CGIVGYIGQL…DKEMVIVTDK (216 aa)) folds into the Glutamine amidotransferase type-2 domain. 2 SIS domains span residues 283 to 422 (ISNA…SRGK) and 452 to 590 (IARE…VDKP). Lysine 595 acts as the For Fru-6P isomerization activity in catalysis.

As to quaternary structure, homodimer.

Its subcellular location is the cytoplasm. The catalysed reaction is D-fructose 6-phosphate + L-glutamine = D-glucosamine 6-phosphate + L-glutamate. In terms of biological role, catalyzes the first step in hexosamine metabolism, converting fructose-6P into glucosamine-6P using glutamine as a nitrogen source. The polypeptide is Glutamine--fructose-6-phosphate aminotransferase [isomerizing] (Bacillus licheniformis (strain ATCC 14580 / DSM 13 / JCM 2505 / CCUG 7422 / NBRC 12200 / NCIMB 9375 / NCTC 10341 / NRRL NRS-1264 / Gibson 46)).